A 502-amino-acid polypeptide reads, in one-letter code: Glycerol kinase (502 aa).

T14 is an ADP binding site. Residues T14, T15, and S16 each contribute to the ATP site. Residue T14 participates in sn-glycerol 3-phosphate binding. ADP is bound at residue R18. The sn-glycerol 3-phosphate site is built by R84, E85, Y136, and D246. Residues R84, E85, Y136, D246, and Q247 each contribute to the glycerol site. 2 residues coordinate ADP: T268 and G311. The ATP site is built by T268, G311, Q315, and G412. ADP-binding residues include G412 and N416.

The protein belongs to the FGGY kinase family. In terms of assembly, homotetramer and homodimer (in equilibrium). Heterodimer with EIIA-Glc. Binds 1 zinc ion per glycerol kinase EIIA-Glc dimer. The zinc ion is important for dimerization.

It carries out the reaction glycerol + ATP = sn-glycerol 3-phosphate + ADP + H(+). Its pathway is polyol metabolism; glycerol degradation via glycerol kinase pathway; sn-glycerol 3-phosphate from glycerol: step 1/1. Its activity is regulated as follows. Activity of this regulatory enzyme is affected by several metabolites. Allosterically and non-competitively inhibited by fructose 1,6-bisphosphate (FBP) and unphosphorylated phosphocarrier protein EIIA-Glc (III-Glc), an integral component of the bacterial phosphotransferase (PTS) system. Functionally, key enzyme in the regulation of glycerol uptake and metabolism. Catalyzes the phosphorylation of glycerol to yield sn-glycerol 3-phosphate. The polypeptide is Glycerol kinase (Escherichia fergusonii (strain ATCC 35469 / DSM 13698 / CCUG 18766 / IAM 14443 / JCM 21226 / LMG 7866 / NBRC 102419 / NCTC 12128 / CDC 0568-73)).